The primary structure comprises 309 residues: Ribonuclease Z (309 aa).

Positions 63, 65, 67, 68, 141, 212, and 270 each coordinate Zn(2+). The Proton acceptor role is filled by Asp-67.

Belongs to the RNase Z family. As to quaternary structure, homodimer. It depends on Zn(2+) as a cofactor.

It catalyses the reaction Endonucleolytic cleavage of RNA, removing extra 3' nucleotides from tRNA precursor, generating 3' termini of tRNAs. A 3'-hydroxy group is left at the tRNA terminus and a 5'-phosphoryl group is left at the trailer molecule.. Its function is as follows. Zinc phosphodiesterase, which displays some tRNA 3'-processing endonuclease activity. Probably involved in tRNA maturation, by removing a 3'-trailer from precursor tRNA. This chain is Ribonuclease Z, found in Halalkalibacterium halodurans (strain ATCC BAA-125 / DSM 18197 / FERM 7344 / JCM 9153 / C-125) (Bacillus halodurans).